Consider the following 386-residue polypeptide: Patatin-17 (386 aa).

The N-terminal stretch at 1–23 is a signal peptide; sequence MATTKSFLILIFMILATTSSTFA. A PNPLA domain is found at 32-229; the sequence is LSIDGGGIRG…TVADPALLSI (198 aa). A GXGXXG motif is present at residues 36-41; sequence GGGIRG. A GXSXG motif is present at residues 75-79; sequence GTSTG. S77 acts as the Nucleophile in catalysis. N202 carries an N-linked (GlcNAc...) asparagine glycan. The active-site Proton acceptor is D215. The short motif at 215-217 is the DGA/G element; it reads DGA. Positions 321–384 form a coiled coil; sequence ENALTGTTTE…DRKKLRANKA (64 aa).

The protein belongs to the patatin family.

It localises to the vacuole. Functionally, non-specific lipolytic acyl hydrolase (LAH), an activity which is thought to be involved in the response of tubers to pathogens. Catalyzes the non-specific hydrolysis of phospholipids, glycolipids, sulfolipids, and mono- and diacylglycerols includng p-nitrophenyl caprate. Confers resistance to southern corn rootworm (SCRW). This is Patatin-17 from Solanum cardiophyllum (Heartleaf nightshade).